The sequence spans 259 residues: GTP cyclohydrolase FolE2 (259 aa).

Belongs to the GTP cyclohydrolase IV family.

It catalyses the reaction GTP + H2O = 7,8-dihydroneopterin 3'-triphosphate + formate + H(+). It functions in the pathway cofactor biosynthesis; 7,8-dihydroneopterin triphosphate biosynthesis; 7,8-dihydroneopterin triphosphate from GTP: step 1/1. Its function is as follows. Converts GTP to 7,8-dihydroneopterin triphosphate. The polypeptide is GTP cyclohydrolase FolE2 (Halorhodospira halophila (strain DSM 244 / SL1) (Ectothiorhodospira halophila (strain DSM 244 / SL1))).